A 334-amino-acid polypeptide reads, in one-letter code: Tryptophan--tRNA ligase (334 aa).

Residues 11–13 (QPS) and 19–20 (GN) each bind ATP. The short motif at 12–20 (PSGELTIGN) is the 'HIGH' region element. Aspartate 135 is an L-tryptophan binding site. ATP-binding positions include 147-149 (GED), valine 186, and 195-199 (KMSKS). The short motif at 195-199 (KMSKS) is the 'KMSKS' region element.

The protein belongs to the class-I aminoacyl-tRNA synthetase family. As to quaternary structure, homodimer.

Its subcellular location is the cytoplasm. The catalysed reaction is tRNA(Trp) + L-tryptophan + ATP = L-tryptophyl-tRNA(Trp) + AMP + diphosphate + H(+). Catalyzes the attachment of tryptophan to tRNA(Trp). In Escherichia coli O157:H7, this protein is Tryptophan--tRNA ligase.